Consider the following 82-residue polypeptide: MRLVVCLVFLASFALVCQGQVYKGGYTRPVPRPPPFVRPLPGGPIGPYNGCPVSCRGISFSQARSCCSRLGRCCHVGKGYSG.

The signal sequence occupies residues 1–19 (MRLVVCLVFLASFALVCQG). Pyrrolidone carboxylic acid is present on Gln20. Disulfide bonds link Cys51/Cys66, Cys55/Cys73, and Cys67/Cys74. Serine amide is present on Ser81.

This sequence belongs to the penaeidin family. As to expression, higher expression in hemocytes and to a lesser extent in heart, testis, gills, intestine, lymphoid organ and hepatopancreas. Traces in eyes and subcuticular epithelium. Not present in the brain.

It is found in the cytoplasmic granule. Its function is as follows. Antibacterial activity against M.luteus and E.coli bacteria. Antifungal activity against N.crassa and F.oxysporum. Presents chitin-binding activity. The protein is Penaeidin-3b of Penaeus vannamei (Whiteleg shrimp).